We begin with the raw amino-acid sequence, 162 residues long: Protein snakeskin (162 aa).

At 2–6 (VSVET) the chain is on the cytoplasmic side. The chain crosses the membrane as a helical span at residues 7–27 (VGSIFIKALKLIINLVIIFLY). Topologically, residues 28 to 53 (RWGDGGEFLGIGGTWNLNEEKSADAE) are extracellular. A helical membrane pass occupies residues 54 to 74 (IVASGVMVGFLIYTGCHTIAF). Topologically, residues 75 to 88 (AFGTTKHKGELCDT) are cytoplasmic. A helical transmembrane segment spans residues 89-109 (IMNVVGCIMWIAVGGVALHYW). Over 110-128 (KGYMSDEGFLYVNSERQVG) the chain is Extracellular. The chain crosses the membrane as a helical span at residues 129-149 (IAMGSLCVIEGALYLLDTVLA). Residues 150-162 (CIHYSKGDTDYTQ) lie on the Cytoplasmic side of the membrane.

In terms of assembly, forms a complex with Tsp2A and mesh. Interacts with mesh; the interaction may be necessary for the localization of both proteins to the cell apicolateral region.

It localises to the apicolateral cell membrane. It is found in the cell junction. Its subcellular location is the septate junction. Its function is as follows. Required for assembly of smooth septate junctions (sSJs), together with mesh and Tsp2A. May be important for barrier function of the midgut epithelium. The polypeptide is Protein snakeskin (Drosophila melanogaster (Fruit fly)).